A 249-amino-acid chain; its full sequence is AA9 family lytic polysaccharide monooxygenase A (249 aa).

The signal sequence occupies residues 1 to 19 (MRGPLCFTLIAIAVTSVVA). Cu(2+) contacts are provided by H20 and H97. Cysteines 60 and 183 form a disulfide. Position 163 (H163) interacts with O2. Position 180 (Y180) interacts with Cu(2+).

The protein belongs to the polysaccharide monooxygenase AA9 family. Cu(2+) is required as a cofactor.

It localises to the secreted. It carries out the reaction [(1-&gt;4)-beta-D-glucosyl]n+m + reduced acceptor + O2 = 4-dehydro-beta-D-glucosyl-[(1-&gt;4)-beta-D-glucosyl]n-1 + [(1-&gt;4)-beta-D-glucosyl]m + acceptor + H2O.. Functionally, lytic polysaccharide monooxygenase (LPMO) that depolymerizes crystalline and amorphous polysaccharides via the oxidation of scissile alpha- or beta-(1-4)-glycosidic bonds, yielding C4 oxidation products. Catalysis by LPMOs requires the reduction of the active-site copper from Cu(II) to Cu(I) by a reducing agent and H(2)O(2) or O(2) as a cosubstrate. Active on cellulose and cello-oligosaccharides, as well as plant cell wall-derived hemicellulosic polysaccharides. Also active on cello-oligosaccharides such as cellohexaose, cellopentaose or cellotetraose. This Armillaria gallica (Bulbous honey fungus) protein is AA9 family lytic polysaccharide monooxygenase A.